The following is a 626-amino-acid chain: ATP-dependent rRNA helicase spb4 (626 aa).

Residues 14–42 (WDALTPSLAEWVLDAISSMGFEKMTPVQA) carry the Q motif motif. The 202-residue stretch at 45 to 246 (IPLFMGNKDV…RVGLRNPVKI (202 aa)) folds into the Helicase ATP-binding domain. 58–65 (AVTGSGKT) is a binding site for ATP. The DEAD box motif lies at 194-197 (DEAD). The region spanning 279 to 437 (ALLSLLSQLE…TTGEAAKILI (159 aa)) is the Helicase C-terminal domain. The disordered stretch occupies residues 553-599 (QREAWSQKHEKQDLKELKREKKKRKREIERLEKMTDEEKKEEQAKEK). 2 stretches are compositionally biased toward basic and acidic residues: residues 554-571 (REAWSQKHEKQDLKELKR) and 578-599 (REIERLEKMTDEEKKEEQAKEK). Residues 558 to 620 (SQKHEKQDLK…RKIEDDADVE (63 aa)) are a coiled coil.

Belongs to the DEAD box helicase family. DDX55/SPB4 subfamily. Component of pre-60S ribosomal complexes.

The protein resides in the nucleus. It is found in the nucleolus. It catalyses the reaction ATP + H2O = ADP + phosphate + H(+). In terms of biological role, ATP-binding RNA helicase involved in the biogenesis of 60S ribosomal subunits. Binds 90S pre-ribosomal particles and dissociates from pre-60S ribosomal particles after processing of 27SB pre-rRNA. Required for the normal formation of 18S rRNA through the processing of pre-rRNAs at sites A0, A1 and A2, and the normal formation of 25S and 5.8S rRNAs through the processing of pre-rRNAs at sites C1 and C2. The polypeptide is ATP-dependent rRNA helicase spb4 (Botryotinia fuckeliana (strain B05.10) (Noble rot fungus)).